We begin with the raw amino-acid sequence, 912 residues long: DNA ligase 4 (912 aa).

Positions 276, 277, 278, 279, 283, 336, 350, 372, 432, 437, 454, and 456 each coordinate ATP. Lys278 serves as the catalytic N6-AMP-lysine intermediate. Glu336 is a Mg(2+) binding site. Glu432 contributes to the Mg(2+) binding site. A required for catalytic activity region spans residues 615 to 625 (LASKHLYIDEY). BRCT domains are found at residues 659 to 748 (KVSS…PAFM) and 809 to 912 (CKLC…QFLI).

It belongs to the ATP-dependent DNA ligase family. Interacts with XRCC4; the LIG4-XRCC4 subcomplex has a 1:2 stoichiometry. Component of the core long-range non-homologous end joining (NHEJ) complex (also named DNA-PK complex) composed of PRKDC, LIG4, XRCC4, XRCC6/Ku70, XRCC5/Ku86 and NHEJ1/XLF. Additional component of the NHEJ complex includes PAXX. Following autophosphorylation, PRKDC dissociates from DNA, leading to formation of the short-range NHEJ complex, composed of LIG4, XRCC4, XRCC6/Ku70, XRCC5/Ku86 and NHEJ1/XLF. Mg(2+) serves as cofactor.

It localises to the nucleus. It carries out the reaction ATP + (deoxyribonucleotide)n-3'-hydroxyl + 5'-phospho-(deoxyribonucleotide)m = (deoxyribonucleotide)n+m + AMP + diphosphate.. Functionally, DNA ligase involved in DNA non-homologous end joining (NHEJ); required for double-strand break (DSB) repair and V(D)J recombination. Catalyzes the NHEJ ligation step of the broken DNA during DSB repair by resealing the DNA breaks after the gap filling is completed. Joins single-strand breaks in a double-stranded polydeoxynucleotide in an ATP-dependent reaction. LIG4 is mechanistically flexible: it can ligate nicks as well as compatible DNA overhangs alone, while in the presence of XRCC4, it can ligate ends with 2-nucleotides (nt) microhomology and 1-nt gaps. Forms a subcomplex with XRCC4; the LIG4-XRCC4 subcomplex is responsible for the NHEJ ligation step and XRCC4 enhances the joining activity of LIG4. The protein is DNA ligase 4 of Gallus gallus (Chicken).